A 165-amino-acid polypeptide reads, in one-letter code: Sulfopyruvate decarboxylase subunit alpha (165 aa).

The protein belongs to the ComD family. Heterododecamer composed of 6 subunits alpha and 6 subunits beta.

The enzyme catalyses 3-sulfopyruvate + H(+) = sulfoacetaldehyde + CO2. It participates in cofactor biosynthesis; coenzyme M biosynthesis; sulfoacetaldehyde from phosphoenolpyruvate and sulfite: step 4/4. Involved in the biosynthesis of the coenzyme M (2-mercaptoethanesulfonic acid). Catalyzes the decarboxylation of sulfopyruvate to sulfoacetaldehyde. This chain is Sulfopyruvate decarboxylase subunit alpha, found in Methanothermobacter thermautotrophicus (strain ATCC 29096 / DSM 1053 / JCM 10044 / NBRC 100330 / Delta H) (Methanobacterium thermoautotrophicum).